We begin with the raw amino-acid sequence, 466 residues long: Asparagine--tRNA ligase (466 aa).

It belongs to the class-II aminoacyl-tRNA synthetase family. Homodimer.

The protein resides in the cytoplasm. The catalysed reaction is tRNA(Asn) + L-asparagine + ATP = L-asparaginyl-tRNA(Asn) + AMP + diphosphate + H(+). The chain is Asparagine--tRNA ligase from Pectobacterium atrosepticum (strain SCRI 1043 / ATCC BAA-672) (Erwinia carotovora subsp. atroseptica).